Consider the following 281-residue polypeptide: 2,3,4,5-tetrahydropyridine-2,6-dicarboxylate N-succinyltransferase (281 aa).

The substrate site is built by arginine 108 and aspartate 145.

This sequence belongs to the transferase hexapeptide repeat family. In terms of assembly, homotrimer.

The protein resides in the cytoplasm. It carries out the reaction (S)-2,3,4,5-tetrahydrodipicolinate + succinyl-CoA + H2O = (S)-2-succinylamino-6-oxoheptanedioate + CoA. Its pathway is amino-acid biosynthesis; L-lysine biosynthesis via DAP pathway; LL-2,6-diaminopimelate from (S)-tetrahydrodipicolinate (succinylase route): step 1/3. The protein is 2,3,4,5-tetrahydropyridine-2,6-dicarboxylate N-succinyltransferase of Bradyrhizobium diazoefficiens (strain JCM 10833 / BCRC 13528 / IAM 13628 / NBRC 14792 / USDA 110).